Reading from the N-terminus, the 311-residue chain is MFQHKTVLLRETVDGLNIKPDGTYVDCTLGGAGHSTYLLQQLSEKGRLIAFDQDDTALENAKKTLSEYKGQLILVKSNFRYLKECLHEHGITSVDGILFDLGVSSPQLDTPERGFSYHHDAPLDMRMDQSAALTAKEVVNEWRYEDLVRIFFKYGEEKFSKQIARKIEEAREKSPIQTTGQLVDLIKDAIPAPARRSGGHPAKRVFQAIRIAVNDELQVFEEALLQAIEVLKPGGRVSVITFHSLEDRMCKMTFKEKSSLPELPPGLPVIPEEFEPELKLITRKPITASKEELEENNRARSAKLRIAEKRK.

S-adenosyl-L-methionine is bound by residues Ala-32–His-34, Asp-52, Phe-79, Asp-100, and Gln-107. Positions Ser-289–Arg-298 are enriched in basic and acidic residues. A disordered region spans residues Ser-289 to Lys-311. The segment covering Arg-300–Lys-311 has biased composition (basic residues).

This sequence belongs to the methyltransferase superfamily. RsmH family.

The protein localises to the cytoplasm. The catalysed reaction is cytidine(1402) in 16S rRNA + S-adenosyl-L-methionine = N(4)-methylcytidine(1402) in 16S rRNA + S-adenosyl-L-homocysteine + H(+). In terms of biological role, specifically methylates the N4 position of cytidine in position 1402 (C1402) of 16S rRNA. The polypeptide is Ribosomal RNA small subunit methyltransferase H (Bacillus velezensis (strain DSM 23117 / BGSC 10A6 / LMG 26770 / FZB42) (Bacillus amyloliquefaciens subsp. plantarum)).